The sequence spans 397 residues: Lysophospholipid transporter LplT (397 aa).

Residues 1–17 (MSESVHTNTSLWSKGMK) are Periplasmic-facing. Residues 18–38 (AVIVAQFLSAFGDNALLFATL) traverse the membrane as a helical segment. Topologically, residues 39 to 52 (ALLKAQFYPEWSQP) are cytoplasmic. The helical transmembrane segment at 53 to 73 (ILQMVFVGAYILFAPFVGQVA) threads the bilayer. At 74 to 90 (DSFAKGRVMMFANGLKL) the chain is on the periplasmic side. A helical membrane pass occupies residues 91 to 111 (LGAASICFGINPFLGYTLVGV). Over 112–144 (GAAAYSPAKYGILGELTTGSKLVKANGLMEAST) the chain is Cytoplasmic. A helical membrane pass occupies residues 145 to 165 (IAAILLGSVAGGVLADWHVLV). A topological domain (periplasmic) is located at residue A166. The helical transmembrane segment at 167–187 (LAACALAYGGAVVANIYIPKL) threads the bilayer. The Cytoplasmic portion of the chain corresponds to 188–226 (AAARPGQSWNLINMTRSFLNACTSLWRNGETRFSLVGTS). The helical transmembrane segment at 227–247 (LFWGAGVTLRFLLVLWVPVAL) threads the bilayer. The Periplasmic portion of the chain corresponds to 248–256 (GITDNATPT). The chain crosses the membrane as a helical span at residues 257–277 (YLNAMVAIGIVVGAGAAAKLV). Residues 278-280 (TLE) are Cytoplasmic-facing. Residues 281 to 301 (TVSRCMPAGILIGVVVLIFSL) traverse the membrane as a helical segment. Residues 302-304 (QHE) are Periplasmic-facing. Residues 305-325 (LLPAYALLMLIGVLGGFFVVP) form a helical membrane-spanning segment. At 326–343 (LNALLQERGKKSVGAGNA) the chain is on the cytoplasmic side. Residues 344 to 364 (IAVQNLGENSAMLLMLGIYSL) traverse the membrane as a helical segment. The Periplasmic portion of the chain corresponds to 365–366 (AV). The helical transmembrane segment at 367–387 (MVGIPVVPIGIGFGALFALAI) threads the bilayer. Over 388-397 (TALWIWQRRY) the chain is Cytoplasmic.

This sequence belongs to the major facilitator superfamily. LplT (TC 2.A.1.42) family.

The protein localises to the cell inner membrane. In terms of biological role, catalyzes the facilitated diffusion of 2-acyl-glycero-3-phosphoethanolamine (2-acyl-GPE) into the cell. The chain is Lysophospholipid transporter LplT from Escherichia coli O127:H6 (strain E2348/69 / EPEC).